Here is a 401-residue protein sequence, read N- to C-terminus: Protein KlcB (401 aa).

Positions 253-311 (AARSNAKGKAGGRERDPASAETAMRCSTAKADDCKAEAGPVSPEATMPGAGEASCSTAR) are disordered.

In Escherichia coli, this protein is Protein KlcB (klcB).